We begin with the raw amino-acid sequence, 585 residues long: Packaging protein UL32 (585 aa).

Residues 1–25 (MDRVESEEPMDGFESPVFSENTSSN) form a disordered region. 8 residues coordinate Zn(2+): cysteine 107, cysteine 110, histidine 187, cysteine 193, cysteine 408, cysteine 411, histidine 484, and cysteine 491. 2 zinc finger regions span residues 107–193 (CLVC…LHVC) and 408–491 (CMLC…DLLC).

The protein belongs to the herpesviridae UL32 protein family.

The protein localises to the host cytoplasm. It is found in the host nucleus. In terms of biological role, plays a role in efficient localization of neo-synthesized capsids to nuclear replication compartments, thereby controlling cleavage and packaging of virus genomic DNA. In Varicella-zoster virus (strain Dumas) (HHV-3), this protein is Packaging protein UL32 (26).